The chain runs to 282 residues: MSIQEVRPNNTIYINNLNEKIKKDELKKSLYAIFSQFGQILDILVSRNLKMRGQAFVIFKETSSATNALRSMQGFPFYDKPMRIQYSKTDSDIIAKMKGTFVERDRKRQEKRKVKVPEVQGVKNAMPGAALLPGVPGQMAAMQDMPGMTQAPRMMHMAGQAPYMHHPGMMPPPGMAPGQMPPGGMPHGQLMPGQMAPMQPISENPPNHILFLTNLPEETNELMLSMLFNQFPGFKEVRLVPGRHDIAFVEFDNEVQAGAARESLQGFKITQSNSMKISFAKK.

RRM domains are found at residues 10-89 and 208-282; these read NTIY…YSKT and HILF…FAKK.

It belongs to the RRM U1 A/B'' family. As to quaternary structure, U1 snRNP is composed of the 7 core Sm proteins snrpb, snrpd1, snrpd2, snrpd3, snrpe, snrpf and snrpg that assemble in a heptameric protein ring on the Sm site of the small nuclear RNA to form the core snRNP, and at least three U1 snRNP-specific proteins snrnp70/U1-70K, snrpa/U1-A and snrpc/U1-C.

It is found in the nucleus. Functionally, component of the spliceosomal U1 snRNP, which is essential for recognition of the pre-mRNA 5' splice-site and the subsequent assembly of the spliceosome. U1 snRNP is the first snRNP to interact with pre-mRNA. This interaction is required for the subsequent binding of U2 snRNP and the U4/U6/U5 tri-snRNP. Snrpa binds stem loop II of U1 snRNA. The polypeptide is U1 small nuclear ribonucleoprotein A (snrpa) (Xenopus laevis (African clawed frog)).